We begin with the raw amino-acid sequence, 317 residues long: RHOMBOID-like protein 2 (317 aa).

A run of 7 helical transmembrane segments spans residues 33–53, 118–138, 149–169, 172–192, 202–222, 224–244, and 272–292; these read SWLI…VMFV, WLHA…FIGI, VGLI…LFLQ, ISVG…SELL, AAAL…GMLP, VDNF…FVLL, and LFVV…VMLF. The Nucleophile role is filled by serine 177. Residue histidine 229 is the Charge relay system of the active site.

The protein belongs to the peptidase S54 family. Expressed in roots, seedlings, leaves, stems and flowers.

It localises to the golgi apparatus membrane. The catalysed reaction is Cleaves type-1 transmembrane domains using a catalytic dyad composed of serine and histidine that are contributed by different transmembrane domains.. In terms of biological role, rhomboid-type serine protease that catalyzes intramembrane proteolysis. Can cleave the Drosophila proteins Spitz and Keren. May function in pollen elongation. This is RHOMBOID-like protein 2 from Arabidopsis thaliana (Mouse-ear cress).